The sequence spans 935 residues: MTDYKDTLNLPETGFPMRGDLAKREPAMLKNWYDKNLYQQIRQTSKGKKTFILHDGPPYANGNLHLGHAVNKILKDIIMKSKTASGFDTPYVPGWDCHGLPIELKVESIVGKPNEKISAAEFRQACREYANEQVDRQKADFIRMGVLGDWDNPYLTMNFNTEASIIRTLAKVIANGHLYKGSKPVHWCLDCGSSLAEAEVEYEDKVSPSIYVRFKACDETAIETLFNAKGNGPISAIIWTTTPWTMPSNRAIAIHPELEYALVQLADERVILATELVESVAKAIEAESFDILATVKGETLQLLRFHHPFYAFDVPFIFGDHVTTEGGTGLVHTAPDHGTDDFIIARKNNIEMAGLIGNDGKFKSDVEFFAGLAVFESNEKVIEKLKETGALLKLARIKHSYPHCWRHKTPIIFRATPQWFIGMEKQGLRAQALAEIKTVRWIPNWGEARIDTMVANRPDWCISRQRTWGVPMAMFVHNETEELHPRTLDILELVAQRVEQQGIQAWWDLDPTEVLGEDAQHYHKVPDTLDVWFDSGSTYASVVEQRPEFNGQTADMYLEGSDQHRGWFMSSLMLASATNGKAPYQQVLTHGFVVDEKGRKMSKSIGNVIVPSEVWNKNGADILRLWVASTDYTAEMKVSHGILNSAGDAYRRIRNTARFLLSNLNGFIPARDEVKPNEMIALDRWAVSCALEAQNDIIEAYEHYQFHTVVQRLMRFCSIEMGSFYLDIIKDRQYTTKADSLARRSCQTALWHIAEALVRWIAPILSFTADEIWSHLPTVEGRSEFVFTEQFYSQLFTLNCHDKLDDNYWQQLINIRAEVNRVLEQARNEKTIGAGLEAKVTVYANDEMLPLLHQLGNELRFVLITSQAIVKPLSEADVAEGELAGLAVKVERAEGEKCPRCWHFATDIGTHAEHNAICGRCVENVAGKGEVRRFA.

Residues 58-68 carry the 'HIGH' region motif; sequence PYANGNLHLGH. Residue E559 participates in L-isoleucyl-5'-AMP binding. The 'KMSKS' region signature appears at 600–604; the sequence is KMSKS. K603 contributes to the ATP binding site. Zn(2+) is bound by residues C898, C901, C918, and C921.

It belongs to the class-I aminoacyl-tRNA synthetase family. IleS type 1 subfamily. In terms of assembly, monomer. It depends on Zn(2+) as a cofactor.

It localises to the cytoplasm. The catalysed reaction is tRNA(Ile) + L-isoleucine + ATP = L-isoleucyl-tRNA(Ile) + AMP + diphosphate. Its function is as follows. Catalyzes the attachment of isoleucine to tRNA(Ile). As IleRS can inadvertently accommodate and process structurally similar amino acids such as valine, to avoid such errors it has two additional distinct tRNA(Ile)-dependent editing activities. One activity is designated as 'pretransfer' editing and involves the hydrolysis of activated Val-AMP. The other activity is designated 'posttransfer' editing and involves deacylation of mischarged Val-tRNA(Ile). The polypeptide is Isoleucine--tRNA ligase (Haemophilus ducreyi (strain 35000HP / ATCC 700724)).